Here is a 185-residue protein sequence, read N- to C-terminus: MYIIAGLGNPGKEYEGTRHNVGFMVIDALSKKLGIEVSRLKFKSLMGEGHFKGEKVILLKPQTFMNLSGEALYDAVNFYKIPLENVIVVYDDKDLEVGKIRIRRKGSSGGHNGMNSIIYLLNSEDFPRVRIGIGKPEDGDLVRHVLGRFSDEEKKVIDEAVERAAEAVIDIMENGIEHAMSRFNG.

Tyr14 contacts tRNA. The Proton acceptor role is filled by His19. TRNA is bound by residues Phe64, Asn66, and Asn112.

The protein belongs to the PTH family. As to quaternary structure, monomer.

Its subcellular location is the cytoplasm. The catalysed reaction is an N-acyl-L-alpha-aminoacyl-tRNA + H2O = an N-acyl-L-amino acid + a tRNA + H(+). Functionally, hydrolyzes ribosome-free peptidyl-tRNAs (with 1 or more amino acids incorporated), which drop off the ribosome during protein synthesis, or as a result of ribosome stalling. Its function is as follows. Catalyzes the release of premature peptidyl moieties from peptidyl-tRNA molecules trapped in stalled 50S ribosomal subunits, and thus maintains levels of free tRNAs and 50S ribosomes. This chain is Peptidyl-tRNA hydrolase, found in Caldanaerobacter subterraneus subsp. tengcongensis (strain DSM 15242 / JCM 11007 / NBRC 100824 / MB4) (Thermoanaerobacter tengcongensis).